We begin with the raw amino-acid sequence, 413 residues long: MKCSWREGNKIQLLENGEQYYPAVFKAIGEAQERIILETFIWFEDNVGKQLHAALLAAAQRGVKAEVLLDGYGSPDLSDEFVNELTAAGVVFRYYDPRPRLFGMRTNVFRRMHRKIVVIDARIAFIGGLNYSSEHMSSYGPEAKQDYAVRLEGPIVEDILQFELENLPGQSAARRWWRRHHKAEENRQPGEAQVLLVWRDNEEHRDDIERHYLKMLTQAQREVIIANAYFFPGYRFLHALRKAARRGVRIKLIIQGEPDMPIVRVGARLLYNYLVKGGVQVFEYRRRPLHGKVALMDDHWATVGSSNLDPLSLSLNLEANVIIHDRHFNQTLRDNLNGIIAADCQQVDETMLPKRTWWNLTKSVLAFHFLRHFPALVGWLPAHTPRLTQVDPPAQPTMETQDRVETENTGVNP.

2 consecutive PLD phosphodiesterase domains span residues 108–135 (VFRR…SSEH) and 285–312 (RRRP…DPLS). Residues histidine 113, lysine 115, aspartate 120, histidine 290, lysine 292, and aspartate 297 contribute to the active site. The interval 388-413 (TQVDPPAQPTMETQDRVETENTGVNP) is disordered.

The protein belongs to the phospholipase D family. Cardiolipin synthase subfamily. ClsB sub-subfamily.

It is found in the cell membrane. The catalysed reaction is 2 a 1,2-diacyl-sn-glycero-3-phospho-(1'-sn-glycerol) = a cardiolipin + glycerol. Functionally, catalyzes the phosphatidyl group transfer from one phosphatidylglycerol molecule to another to form cardiolipin (CL) (diphosphatidylglycerol) and glycerol. The chain is Cardiolipin synthase B from Shigella flexneri.